Here is a 154-residue protein sequence, read N- to C-terminus: 6,7-dimethyl-8-ribityllumazine synthase (154 aa).

5-amino-6-(D-ribitylamino)uracil is bound by residues Trp-22, 56-58, and 80-82; these read SHE and AVI. A (2S)-2-hydroxy-3-oxobutyl phosphate-binding site is contributed by 85-86; that stretch reads DT. His-88 functions as the Proton donor in the catalytic mechanism. Phe-113 provides a ligand contact to 5-amino-6-(D-ribitylamino)uracil. Arg-127 serves as a coordination point for (2S)-2-hydroxy-3-oxobutyl phosphate.

Belongs to the DMRL synthase family.

The enzyme catalyses (2S)-2-hydroxy-3-oxobutyl phosphate + 5-amino-6-(D-ribitylamino)uracil = 6,7-dimethyl-8-(1-D-ribityl)lumazine + phosphate + 2 H2O + H(+). It functions in the pathway cofactor biosynthesis; riboflavin biosynthesis; riboflavin from 2-hydroxy-3-oxobutyl phosphate and 5-amino-6-(D-ribitylamino)uracil: step 1/2. In terms of biological role, catalyzes the formation of 6,7-dimethyl-8-ribityllumazine by condensation of 5-amino-6-(D-ribitylamino)uracil with 3,4-dihydroxy-2-butanone 4-phosphate. This is the penultimate step in the biosynthesis of riboflavin. The protein is 6,7-dimethyl-8-ribityllumazine synthase of Deinococcus geothermalis (strain DSM 11300 / CIP 105573 / AG-3a).